We begin with the raw amino-acid sequence, 434 residues long: Tol-Pal system protein TolB (434 aa).

An N-terminal signal peptide occupies residues 1 to 24 (MKFSAYLTTLFIVLFSLFIQTVQA).

It belongs to the TolB family. The Tol-Pal system is composed of five core proteins: the inner membrane proteins TolA, TolQ and TolR, the periplasmic protein TolB and the outer membrane protein Pal. They form a network linking the inner and outer membranes and the peptidoglycan layer.

It localises to the periplasm. Functionally, part of the Tol-Pal system, which plays a role in outer membrane invagination during cell division and is important for maintaining outer membrane integrity. This chain is Tol-Pal system protein TolB, found in Histophilus somni (strain 129Pt) (Haemophilus somnus).